Consider the following 1888-residue polypeptide: Protein mms22 (1888 aa).

3 disordered regions span residues 12–34 (DSQD…RGNE), 151–258 (FSSD…ISSN), and 316–354 (RRKL…SRFD). 3 stretches are compositionally biased toward polar residues: residues 13–32 (SQDS…SQRG), 212–227 (SNLN…SSTI), and 338–348 (SDNSISTPTPT).

The protein belongs to the MMS22 family.

Its subcellular location is the nucleus. Its function is as follows. Involved in protection against replication-dependent DNA damage. May act by restoring active replication forks, repairing unusual DNA structures, and/or preventing aberrant DNA rearrangement at arrested replication forks. This is Protein mms22 (mus7) from Schizosaccharomyces pombe (strain 972 / ATCC 24843) (Fission yeast).